Consider the following 753-residue polypeptide: 5-methyltetrahydropteroyltriglutamate--homocysteine methyltransferase (753 aa).

Residues 17-20 (RELK) and Lys117 contribute to the 5-methyltetrahydropteroyltri-L-glutamate site. L-homocysteine contacts are provided by residues 431-433 (IGS) and Glu484. Residues 431–433 (IGS) and Glu484 each bind L-methionine. Residues 515 to 516 (RC) and Trp561 each bind 5-methyltetrahydropteroyltri-L-glutamate. Asp599 lines the L-homocysteine pocket. Asp599 contacts L-methionine. Residue Glu605 coordinates 5-methyltetrahydropteroyltri-L-glutamate. Zn(2+)-binding residues include His641, Cys643, and Glu665. His694 serves as the catalytic Proton donor. Cys726 is a binding site for Zn(2+).

Belongs to the vitamin-B12 independent methionine synthase family. It depends on Zn(2+) as a cofactor.

The catalysed reaction is 5-methyltetrahydropteroyltri-L-glutamate + L-homocysteine = tetrahydropteroyltri-L-glutamate + L-methionine. It participates in amino-acid biosynthesis; L-methionine biosynthesis via de novo pathway; L-methionine from L-homocysteine (MetE route): step 1/1. Catalyzes the transfer of a methyl group from 5-methyltetrahydrofolate to homocysteine resulting in methionine formation. The chain is 5-methyltetrahydropteroyltriglutamate--homocysteine methyltransferase from Escherichia coli O1:K1 / APEC.